Reading from the N-terminus, the 358-residue chain is Alanine racemase (358 aa).

Catalysis depends on K35, which acts as the Proton acceptor; specific for D-alanine. Position 35 is an N6-(pyridoxal phosphate)lysine (K35). R130 provides a ligand contact to substrate. The active-site Proton acceptor; specific for L-alanine is the Y255. Residue M303 coordinates substrate.

The protein belongs to the alanine racemase family. It depends on pyridoxal 5'-phosphate as a cofactor.

It carries out the reaction L-alanine = D-alanine. It functions in the pathway amino-acid biosynthesis; D-alanine biosynthesis; D-alanine from L-alanine: step 1/1. Catalyzes the interconversion of L-alanine and D-alanine. May also act on other amino acids. The polypeptide is Alanine racemase (alr) (Shewanella sediminis (strain HAW-EB3)).